Reading from the N-terminus, the 464-residue chain is ATP synthase subunit beta (464 aa).

152–159 (GGAGVGKS) serves as a coordination point for ATP.

This sequence belongs to the ATPase alpha/beta chains family. As to quaternary structure, F-type ATPases have 2 components, CF(1) - the catalytic core - and CF(0) - the membrane proton channel. CF(1) has five subunits: alpha(3), beta(3), gamma(1), delta(1), epsilon(1). CF(0) has three main subunits: a(1), b(2) and c(9-12). The alpha and beta chains form an alternating ring which encloses part of the gamma chain. CF(1) is attached to CF(0) by a central stalk formed by the gamma and epsilon chains, while a peripheral stalk is formed by the delta and b chains.

It localises to the cell membrane. The enzyme catalyses ATP + H2O + 4 H(+)(in) = ADP + phosphate + 5 H(+)(out). Functionally, produces ATP from ADP in the presence of a proton gradient across the membrane. The catalytic sites are hosted primarily by the beta subunits. The sequence is that of ATP synthase subunit beta from Protochlamydia amoebophila (strain UWE25).